A 564-amino-acid polypeptide reads, in one-letter code: Protein NRT1/ PTR FAMILY 5.16 (564 aa).

The next 2 helical transmembrane spans lie at 49 to 69 (FAYF…LGQS) and 80 to 100 (WSGT…AYLG). At Thr-104 the chain carries Phosphothreonine. 10 helical membrane-spanning segments follow: residues 110–130 (LIYI…LMGL), 145–165 (FFWV…GQGG), 192–212 (FFNW…IVVV), 220–240 (WALG…LFLF), 327–347 (IPIW…ATFF), 358–378 (ILPG…LSIF), 408–428 (IGAG…VEMK), 450–470 (IWWF…SLVG), 486–506 (IGLA…GFLI), and 533–553 (YFYW…LLLS).

This sequence belongs to the major facilitator superfamily. Proton-dependent oligopeptide transporter (POT/PTR) (TC 2.A.17) family. In terms of tissue distribution, expressed in shoots and roots.

It localises to the membrane. The protein is Protein NRT1/ PTR FAMILY 5.16 (NPF5.16) of Arabidopsis thaliana (Mouse-ear cress).